The primary structure comprises 167 residues: Phosphopantetheine adenylyltransferase (167 aa).

Ser10 contributes to the substrate binding site. ATP is bound by residues 10–11 (SF) and His18. Positions 42, 79, and 93 each coordinate substrate. Residues 94 to 96 (GLR), Glu104, and 129 to 135 (VRHITAT) each bind ATP.

The protein belongs to the bacterial CoaD family. In terms of assembly, homohexamer. Mg(2+) serves as cofactor.

Its subcellular location is the cytoplasm. It carries out the reaction (R)-4'-phosphopantetheine + ATP + H(+) = 3'-dephospho-CoA + diphosphate. Its pathway is cofactor biosynthesis; coenzyme A biosynthesis; CoA from (R)-pantothenate: step 4/5. Functionally, reversibly transfers an adenylyl group from ATP to 4'-phosphopantetheine, yielding dephospho-CoA (dPCoA) and pyrophosphate. The chain is Phosphopantetheine adenylyltransferase from Beijerinckia indica subsp. indica (strain ATCC 9039 / DSM 1715 / NCIMB 8712).